The following is a 379-amino-acid chain: Anhydro-N-acetylmuramic acid kinase (379 aa).

ATP is bound at residue 12-19 (GTSLDGMD).

Belongs to the anhydro-N-acetylmuramic acid kinase family.

It catalyses the reaction 1,6-anhydro-N-acetyl-beta-muramate + ATP + H2O = N-acetyl-D-muramate 6-phosphate + ADP + H(+). The protein operates within amino-sugar metabolism; 1,6-anhydro-N-acetylmuramate degradation. It participates in cell wall biogenesis; peptidoglycan recycling. Its function is as follows. Catalyzes the specific phosphorylation of 1,6-anhydro-N-acetylmuramic acid (anhMurNAc) with the simultaneous cleavage of the 1,6-anhydro ring, generating MurNAc-6-P. Is required for the utilization of anhMurNAc either imported from the medium or derived from its own cell wall murein, and thus plays a role in cell wall recycling. The chain is Anhydro-N-acetylmuramic acid kinase from Gloeobacter violaceus (strain ATCC 29082 / PCC 7421).